The chain runs to 923 residues: Lysosomal acid alpha-glucosidase (923 aa).

Residues 1–17 (MKHQVLLPLLVTTAIIA) form the signal peptide. The propeptide occupies 18–36 (GSVGVYTHSKPLLGQSQDQ). Residues Asn65, Asn405, and Asn440 are each glycosylated (N-linked (GlcNAc...) asparagine). Residue Asp455 is the Nucleophile of the active site. Glu458 is a catalytic residue. The active-site Proton donor is Asp585. N-linked (GlcNAc...) asparagine glycosylation is found at Asn586, Asn621, Asn646, Asn848, Asn908, and Asn912.

Belongs to the glycosyl hydrolase 31 family.

It is found in the lysosome. The protein resides in the secreted. The enzyme catalyses Hydrolysis of terminal, non-reducing (1-&gt;4)-linked alpha-D-glucose residues with release of alpha-D-glucose.. Essential for the degradation of glycogen to glucose in lysosomes. Has both alpha-1,4 and alpha-1,6-glucosidase activity. The polypeptide is Lysosomal acid alpha-glucosidase (Tetrahymena pyriformis).